Consider the following 408-residue polypeptide: Solute carrier family 35 member F1 (408 aa).

The interval 1–21 (MIPPEQPQQQLQPPSPAPPNH) is disordered. The next 10 membrane-spanning stretches (helical) occupy residues 60 to 80 (MLIS…IGLT), 94 to 114 (VFQS…TLAV), 129 to 147 (WWKY…YLVV), 158 to 178 (IQLL…FFLL), 186 to 206 (FIGI…DVLV), 221 to 241 (LLVL…EYII), 247 to 267 (VEFL…QLAI), 284 to 304 (LLYV…PVVI), 311 to 331 (SVNL…LFLF), and 335 to 355 (FSGL…LYSS).

The protein belongs to the SLC35F solute transporter family.

The protein localises to the cytoplasmic vesicle. It localises to the secretory vesicle. The protein resides in the synaptic vesicle membrane. Functionally, putative solute transporter. The protein is Solute carrier family 35 member F1 (SLC35F1) of Homo sapiens (Human).